The following is a 61-amino-acid chain: Large ribosomal subunit protein uL30 (61 aa).

Belongs to the universal ribosomal protein uL30 family. As to quaternary structure, part of the 50S ribosomal subunit.

This Chlorobium limicola (strain DSM 245 / NBRC 103803 / 6330) protein is Large ribosomal subunit protein uL30.